The chain runs to 988 residues: Vacuolar sorting protein 18 (988 aa).

The CHCR repeat unit spans residues 589–749; it reads NKNLNPRRLI…VVKQEKGAKR (161 aa). The stretch at 785–819 forms a coiled coil; sequence KEAICSSLEDYNKQIEQLKEEMNDATRGADNIRND. Residues 836-886 form an RING-type; degenerate zinc finger; sequence CGVCKRKILMMSGDFRMAQGYSSAGPLAPFYVFPCGHSFHAQCLITHVTSC.

The protein belongs to the VPS18 family. Core component of at least two putative endosomal tethering complexes, the homotypic fusion and vacuole protein sorting (HOPS) complex and the class C core vacuole/endosome tethering (CORVET) complex. Their common core is composed of the class C Vps proteins VPS11, VCL1, VPS18 and VPS33, which in HOPS further associates with VPS39 and VPS41 and in CORVET with VPS3.

The protein localises to the endosome membrane. It is found in the vacuole membrane. The protein resides in the cytoplasm. Essential protein required during embryogenesis. Believed to act as a core component of the putative HOPS endosomal tethering complex and of the class C core vacuole/endosome tethering (CORVET) complex. CORVET is required for vacuolar transport of SYP22. HOPS is required for the central vacuole formation. Involved in root development. Plays a role in vesicle-mediated protein trafficking to lysosomal compartments including the endocytic membrane transport pathways. The chain is Vacuolar sorting protein 18 from Arabidopsis thaliana (Mouse-ear cress).